The primary structure comprises 604 residues: Prostaglandin G/H synthase 2 (604 aa).

An N-terminal signal peptide occupies residues 1–17 (MLARALLLCVALALGHA). In terms of domain architecture, EGF-like spans 18 to 55 (ANPCCSNPCQNRGVCMSVGFDQYQCDCTRTGFYGENCS). Disulfide bonds link Cys21/Cys32, Cys22/Cys145, Cys26/Cys42, and Cys44/Cys54. An N-linked (GlcNAc...) asparagine glycan is attached at Asn53. Position 106 (Arg106) interacts with substrate. A glycan (N-linked (GlcNAc...) asparagine) is linked at Asn130. The active-site Proton acceptor is the His193. Residue Tyr341 coordinates substrate. Catalysis depends on Tyr371, which acts as the For cyclooxygenase activity. His374 provides a ligand contact to heme b. N-linked (GlcNAc...) asparagine glycosylation occurs at Asn396. At Cys526 the chain carries S-nitrosocysteine. An intrachain disulfide couples Cys555 to Cys561. An N-linked (GlcNAc...) asparagine glycan is attached at Asn580.

The protein belongs to the prostaglandin G/H synthase family. In terms of assembly, homodimer. Requires heme b as cofactor. In terms of processing, S-nitrosylation by NOS2 (iNOS) activates enzyme activity. S-nitrosylation may take place on different Cys residues in addition to Cys-526.

Its subcellular location is the microsome membrane. The protein resides in the endoplasmic reticulum membrane. It is found in the nucleus inner membrane. The protein localises to the nucleus outer membrane. The catalysed reaction is (5Z,8Z,11Z,14Z)-eicosatetraenoate + AH2 + 2 O2 = prostaglandin H2 + A + H2O. It carries out the reaction (5Z,8Z,11Z,14Z)-eicosatetraenoate + 2 O2 = prostaglandin G2. The enzyme catalyses prostaglandin G2 + AH2 = prostaglandin H2 + A + H2O. It catalyses the reaction (5Z,8Z,11Z,14Z,17Z)-eicosapentaenoate + 2 O2 = prostaglandin G3. The catalysed reaction is prostaglandin G3 + AH2 = prostaglandin H3 + A + H2O. It carries out the reaction (8Z,11Z,14Z)-eicosatrienoate + 2 O2 = prostaglandin G1. The enzyme catalyses prostaglandin G1 + AH2 = prostaglandin H1 + A + H2O. It catalyses the reaction 2-(5Z,8Z,11Z,14Z)-eicosatetraenoyl-sn-glycero-3-phosphoethanolamine + 2 O2 = 2-(prostaglandin G2)-sn-glycero-3-phosphoethanolamine. The catalysed reaction is 2-(prostaglandin G2)-sn-glycero-3-phosphoethanolamine + AH2 = 2-(prostaglandin H2)-sn-glycero-3-phosphoethanolamine + A + H2O. It carries out the reaction 2-(5Z,8Z,11Z,14Z)-eicosatetraenoyl-sn-glycero-3-phosphocholine + 2 O2 = 2-(prostaglandin G2)-sn-glycero-3-phosphocholine. The enzyme catalyses 2-(prostaglandin G2)-sn-glycero-3-phosphocholine + AH2 = 2-(prostaglandin H2)-sn-glycero-3-phosphocholine + A + H2O. It catalyses the reaction (15S)-hydroperoxy-(5Z,8Z,11Z,13E)-eicosatetraenoate + AH2 = (15S)-hydroxy-(5Z,8Z,11Z,13E)-eicosatetraenoate + A + H2O. The catalysed reaction is 2-(5Z,8Z,11Z,14Z)-eicosatetraenoyl-sn-glycero-3-phosphocholine + AH2 + O2 = 2-[(15S)-hydroxy-(5Z,8Z,11Z,13E)-eicosatetraenoyl]-sn-glycero-3-phosphocholine + A + H2O. It carries out the reaction 2-(5Z,8Z,11Z,14Z)-eicosatetraenoyl-sn-glycero-3-phosphocholine + AH2 + O2 = 2-[(15R)-hydroxy-(5Z,8Z,11Z,13E)-eicosatetraenoyl]-sn-glycero-3-phosphocholine + A + H2O. The enzyme catalyses 2-(5Z,8Z,11Z,14Z)-eicosatetraenoyl-sn-glycero-3-phosphocholine + AH2 + O2 = 2-[(11R)-hydroxy-(5Z,8Z,12E,14Z)-eicosatetraenoyl]-sn-glycero-3-phosphocholine + A + H2O. It catalyses the reaction (9Z,12Z)-octadecadienoate + AH2 + O2 = 9-hydroxy-(10E,12Z)-octadecadienoate + A + H2O. The catalysed reaction is (9Z,12Z)-octadecadienoate + AH2 + O2 = 13-hydroxy-(9Z,11E)-octadecadienoate + A + H2O. It carries out the reaction (5Z,8Z,11Z,14Z)-eicosatetraenoate + AH2 + O2 = (15R)-hydroxy-(5Z,8Z,11Z,13E)-eicosatetraenoate + A + H2O. The enzyme catalyses (5Z,8Z,11Z,14Z)-eicosatetraenoate + AH2 + O2 = (11R)-hydroxy-(5Z,8Z,12E,14Z)-eicosatetraenoate + A + H2O. It catalyses the reaction (5Z,8Z,11Z,14Z,17Z)-eicosapentaenoate + AH2 + O2 = (11R)-hydroxy-(5Z,8Z,12E,14Z,17Z)-eicosapentaenoate + A + H2O. The catalysed reaction is (5Z,8Z,11Z,14Z,17Z)-eicosapentaenoate + AH2 + O2 = (18S)-hydroxy-(5Z,8Z,11Z,14Z,16E)-eicosapentaenoate + A + H2O. It carries out the reaction (5Z,8Z,11Z,14Z,17Z)-eicosapentaenoate + AH2 + O2 = (18R)-hydroxy-(5Z,8Z,11Z,14Z,16E)-eicosapentaenoate + A + H2O. The enzyme catalyses (5Z,8Z,11Z,14Z,17Z)-eicosapentaenoate + AH2 + O2 = (15R)-hydroxy-(5Z,8Z,11Z,13E,17Z)-eicosapentaenoate + A + H2O. It catalyses the reaction (5Z,8Z,11Z,14Z,17Z)-eicosapentaenoate + AH2 + O2 = (15S)-hydroxy-(5Z,8Z,11Z,13E,17Z)-eicosapentaenoate + A + H2O. The catalysed reaction is (7Z,10Z,13Z,16Z,19Z)-docosapentaenoate + AH2 + O2 = 13R-hydroxy-(7Z,10Z,14E,16Z,19Z)-docosapentaenoate + A + H2O. It carries out the reaction (4Z,7Z,10Z,13Z,16Z,19Z)-docosahexaenoate + AH2 + O2 = 13-hydroxy-(4Z,7Z,10Z,14E,16Z,19Z)-docosahexaenoate + A + H2O. The enzyme catalyses (5S)-hydroxy-(6E,8Z,11Z,14Z)-eicosatetraenoate + AH2 + O2 = (5S,15R)-dihydroxy-(6E,8Z,11Z,13E)-eicosatetraenoate + A + H2O. It catalyses the reaction (4Z,7Z,10Z,13Z,16Z,19Z)-docosahexaenoate + AH2 + O2 = 17R-hydroxy-(4Z,7Z,10Z,13Z,15E,19Z)-docosahexaenoate + A + H2O. The catalysed reaction is (5S)-hydroxy-(6E,8Z,11Z,14Z)-eicosatetraenoate + AH2 + O2 = (5S,15S)-dihydroxy-(6E,8Z,11Z,13E)-eicosatetraenoate + A + H2O. It carries out the reaction (5S)-hydroxy-(6E,8Z,11Z,14Z)-eicosatetraenoate + AH2 + O2 = (5S,11R)-dihydroxy-(6E,8Z,12E,14Z)-eicosatetraenoate + A + H2O. The enzyme catalyses 2-(5Z,8Z,11Z,14Z-eicosatetraenoyl)-glycerol + 2 O2 = 2-glyceryl-prostaglandin G2. It catalyses the reaction 2-glyceryl-prostaglandin G2 + AH2 = 2-glyceryl-prostaglandin H2 + A + H2O. The catalysed reaction is (5Z,8Z,11Z,14Z)-eicosatetraenoate + O2 = (15R)-hydroperoxy-(5Z,8Z,11Z,13E)-eicosatetraenoate. It carries out the reaction (5Z,8Z,11Z,14Z)-eicosatetraenoate + O2 = 11R-hydroperoxy-(5Z,8Z,12E,14Z)-eicosatetraenoate. The enzyme catalyses (9Z,12Z)-octadecadienoate + AH2 + O2 = (9R)-hydroxy-(10E,12Z)-octadecadienoate + A + H2O. It catalyses the reaction (9Z,12Z)-octadecadienoate + AH2 + O2 = (9S)-hydroxy-(10E,12Z)-octadecadienoate + A + H2O. The catalysed reaction is (9Z,12Z)-octadecadienoate + AH2 + O2 = (13S)-hydroxy-(9Z,11E)-octadecadienoate + A + H2O. It carries out the reaction (9Z,12Z)-octadecadienoate + AH2 + O2 = (13R)-hydroxy-(9Z,11E)-octadecadienoate + A + H2O. Its pathway is lipid metabolism; prostaglandin biosynthesis. In terms of biological role, dual cyclooxygenase and peroxidase in the biosynthesis pathway of prostanoids, a class of C20 oxylipins mainly derived from arachidonate ((5Z,8Z,11Z,14Z)-eicosatetraenoate, AA, C20:4(n-6)), with a particular role in the inflammatory response. The cyclooxygenase activity oxygenates AA to the hydroperoxy endoperoxide prostaglandin G2 (PGG2), and the peroxidase activity reduces PGG2 to the hydroxy endoperoxide prostaglandin H2 (PGH2), the precursor of all 2-series prostaglandins and thromboxanes. This complex transformation is initiated by abstraction of hydrogen at carbon 13 (with S-stereochemistry), followed by insertion of molecular O2 to form the endoperoxide bridge between carbon 9 and 11 that defines prostaglandins. The insertion of a second molecule of O2 (bis-oxygenase activity) yields a hydroperoxy group in PGG2 that is then reduced to PGH2 by two electrons. Similarly catalyzes successive cyclooxygenation and peroxidation of dihomo-gamma-linoleate (DGLA, C20:3(n-6)) and eicosapentaenoate (EPA, C20:5(n-3)) to corresponding PGH1 and PGH3, the precursors of 1- and 3-series prostaglandins. In an alternative pathway of prostanoid biosynthesis, converts 2-arachidonoyl lysophopholipids to prostanoid lysophopholipids, which are then hydrolyzed by intracellular phospholipases to release free prostanoids. Metabolizes 2-arachidonoyl glycerol yielding the glyceryl ester of PGH2, a process that can contribute to pain response. Generates lipid mediators from n-3 and n-6 polyunsaturated fatty acids (PUFAs) via a lipoxygenase-type mechanism. Oxygenates PUFAs to hydroperoxy compounds and then reduces them to corresponding alcohols. Plays a role in the generation of resolution phase interaction products (resolvins) during both sterile and infectious inflammation. Metabolizes docosahexaenoate (DHA, C22:6(n-3)) to 17R-HDHA, a precursor of the D-series resolvins (RvDs). As a component of the biosynthetic pathway of E-series resolvins (RvEs), converts eicosapentaenoate (EPA, C20:5(n-3)) primarily to 18S-HEPE that is further metabolized by ALOX5 and LTA4H to generate 18S-RvE1 and 18S-RvE2. In vascular endothelial cells, converts docosapentaenoate (DPA, C22:5(n-3)) to 13R-HDPA, a precursor for 13-series resolvins (RvTs) shown to activate macrophage phagocytosis during bacterial infection. In activated leukocytes, contributes to oxygenation of hydroxyeicosatetraenoates (HETE) to diHETES (5,15-diHETE and 5,11-diHETE). Can also use linoleate (LA, (9Z,12Z)-octadecadienoate, C18:2(n-6)) as substrate and produce hydroxyoctadecadienoates (HODEs) in a regio- and stereospecific manner, being (9R)-HODE ((9R)-hydroxy-(10E,12Z)-octadecadienoate) and (13S)-HODE ((13S)-hydroxy-(9Z,11E)-octadecadienoate) its major products. During neuroinflammation, plays a role in neuronal secretion of specialized preresolving mediators (SPMs) 15R-lipoxin A4 that regulates phagocytic microglia. In Equus caballus (Horse), this protein is Prostaglandin G/H synthase 2 (PTGS2).